The chain runs to 701 residues: Glycine--tRNA ligase beta subunit (701 aa).

This sequence belongs to the class-II aminoacyl-tRNA synthetase family. As to quaternary structure, tetramer of two alpha and two beta subunits.

It is found in the cytoplasm. The enzyme catalyses tRNA(Gly) + glycine + ATP = glycyl-tRNA(Gly) + AMP + diphosphate. In Nitratidesulfovibrio vulgaris (strain DSM 19637 / Miyazaki F) (Desulfovibrio vulgaris), this protein is Glycine--tRNA ligase beta subunit.